Here is a 406-residue protein sequence, read N- to C-terminus: Argininosuccinate synthase (406 aa).

8-16 (AYSGGLDTS) is an ATP binding site. Tyr86 contributes to the L-citrulline binding site. Residue Gly116 coordinates ATP. 3 residues coordinate L-aspartate: Thr118, Asn122, and Asp123. Asn122 contributes to the L-citrulline binding site. L-citrulline contacts are provided by Arg126, Ser174, Glu259, and Tyr271.

This sequence belongs to the argininosuccinate synthase family. Type 1 subfamily. Homotetramer.

The protein resides in the cytoplasm. The catalysed reaction is L-citrulline + L-aspartate + ATP = 2-(N(omega)-L-arginino)succinate + AMP + diphosphate + H(+). Its pathway is amino-acid biosynthesis; L-arginine biosynthesis; L-arginine from L-ornithine and carbamoyl phosphate: step 2/3. This chain is Argininosuccinate synthase, found in Lacticaseibacillus paracasei (strain ATCC 334 / BCRC 17002 / CCUG 31169 / CIP 107868 / KCTC 3260 / NRRL B-441) (Lactobacillus paracasei).